A 679-amino-acid chain; its full sequence is E3 ubiquitin ligase RNF157 (679 aa).

A lipid anchor (N-myristoyl glycine) is attached at G2. An RING-type zinc finger spans residues C277–R316. The D-box 1 signature appears at R329–L332. 2 stretches are compositionally biased toward polar residues: residues S339–S349 and E478–G537. Disordered stretches follow at residues S339–P362, L416–G604, and V650–V679. Acidic residues predominate over residues Q585–G598. Residues R656–L659 carry the D-box 2 motif. S660, S661, S662, and S663 each carry phosphoserine.

As to quaternary structure, interacts with APBB1. Interacts with CHD1; CHD1-binding controls RNF157 stability. Interacts with ATRN, MEGF8, TECR, MSI2, PLRG1, BYSL, MTERF3, PSMA1, MRPS18B, PRPF4, FASTKD2, SLC25A1, SMU1, CNOT9, MRPS2, MAGT1, FXR2, EMD, PSMD8, HDAC1, RAN, HSD17B12, TXNDC5 and MRPL19. In terms of processing, phosphorylation at Ser-660, Ser-661, Ser-662 and Ser-663 downstream of the PI3K and MAPK pathways influences the E3 ligase activity and stability of RNF157 during the cell cycle in an anaphase-promoting complex/cyclosome-CDH1-dependent manner.

Its subcellular location is the cytoplasm. The catalysed reaction is S-ubiquitinyl-[E2 ubiquitin-conjugating enzyme]-L-cysteine + [acceptor protein]-L-lysine = [E2 ubiquitin-conjugating enzyme]-L-cysteine + N(6)-ubiquitinyl-[acceptor protein]-L-lysine.. In terms of biological role, E3 ubiquitin ligase that ubiquitinates APBB1 for its degradation by the proteasome and thus prevents apoptosis and promotes survival of neurons. Has a dual role in neurons as it is also required for dendrite growth and maintenance for which its ligase activity is not critical. May act as a scaffold molecule to regulate this process. Acts as a downstream effector of the interconnected PI3K and MAPK signaling pathways and thus participates in the regulation of the cell cycle. This chain is E3 ubiquitin ligase RNF157 (RNF157), found in Homo sapiens (Human).